Here is a 386-residue protein sequence, read N- to C-terminus: MKDCEYQQISPGAAPPPASPGVHRPGPAAPPGPSPGPAPGAPRWSVSGSGSGSGSGSGSLGRRPRRKWEVFPGRNRFYCGGRLMLAGHGGVFALTLLLILSTTILFFIFDCPYLARTLTLAIPIIAAILFFFVMSCLLQTSFTDPGILPRATICEAAALEKQIDNTGSSTYRPPPRTREVMINGQMVKLKYCFTCKMFRPPRTSHCSVCDNCVERFDHHCPWVGNCVGRRNYRFFYAFILSLSFLTAFIFACVVTHLTLLSQGSNFLSALNKTPAGVLELVICFFSIWSILGLSGFHTYLVASNLTTNEDIKGSWSSKRGGEASVNPYSHKSIITNCCAVLCGPLPPSLIDRRGFVQSDTVLPSPIRSDEPACGAKPDASMVGGHP.

The tract at residues 1–65 (MKDCEYQQIS…GSGSLGRRPR (65 aa)) is disordered. Residues 1-88 (MKDCEYQQIS…CGGRLMLAGH (88 aa)) are Cytoplasmic-facing. Phosphoserine is present on serine 19. Residues 27–40 (PAAPPGPSPGPAPG) show a composition bias toward pro residues. A compositionally biased stretch (gly residues) spans 49-59 (SGSGSGSGSGS). The chain crosses the membrane as a helical span at residues 89–109 (GGVFALTLLLILSTTILFFIF). Residues 110 to 117 (DCPYLART) lie on the Lumenal side of the membrane. A helical membrane pass occupies residues 118–138 (LTLAIPIIAAILFFFVMSCLL). The Cytoplasmic segment spans residues 139 to 233 (QTSFTDPGIL…GNCVGRRNYR (95 aa)). The DHHC domain maps to 190 to 240 (KYCFTCKMFRPPRTSHCSVCDNCVERFDHHCPWVGNCVGRRNYRFFYAFIL). Residue cysteine 220 is the S-palmitoyl cysteine intermediate of the active site. A helical transmembrane segment spans residues 234 to 254 (FFYAFILSLSFLTAFIFACVV). Topologically, residues 255–275 (THLTLLSQGSNFLSALNKTPA) are lumenal. A helical membrane pass occupies residues 276–296 (GVLELVICFFSIWSILGLSGF). Residues 297–386 (HTYLVASNLT…PDASMVGGHP (90 aa)) are Cytoplasmic-facing. The disordered stretch occupies residues 362 to 386 (LPSPIRSDEPACGAKPDASMVGGHP).

This sequence belongs to the DHHC palmitoyltransferase family. ERF2/ZDHHC9 subfamily.

It localises to the golgi apparatus membrane. It catalyses the reaction L-cysteinyl-[protein] + hexadecanoyl-CoA = S-hexadecanoyl-L-cysteinyl-[protein] + CoA. Functionally, palmitoyltransferase that catalyzes the addition of palmitate onto various protein substrates, such as CGAS, HRAS and LCK. Acts as a negative regulator of the cGAS-STING pathway be mediating palmitoylation and inactivation of CGAS. May also have a palmitoyltransferase activity toward the beta-2 adrenergic receptor/ADRB2 and therefore regulate G protein-coupled receptor signaling. The chain is Palmitoyltransferase ZDHHC18 from Rattus norvegicus (Rat).